The chain runs to 279 residues: uncharacterized protein (279 aa).

The HTH lysR-type domain occupies 14-71 (ITPNQIKLLIALHKTKSQNEAAKLLNIKPSSFNIQLKRLENKLGVKLYYSSPNGTVLT). Positions 31 to 50 (QNEAAKLLNIKPSSFNIQLK) form a DNA-binding region, H-T-H motif.

It belongs to the LysR transcriptional regulatory family.

This is an uncharacterized protein from Methanocaldococcus jannaschii (strain ATCC 43067 / DSM 2661 / JAL-1 / JCM 10045 / NBRC 100440) (Methanococcus jannaschii).